The primary structure comprises 141 residues: Large ribosomal subunit protein uL11 (141 aa).

The protein belongs to the universal ribosomal protein uL11 family. Part of the ribosomal stalk of the 50S ribosomal subunit. Interacts with L10 and the large rRNA to form the base of the stalk. L10 forms an elongated spine to which L12 dimers bind in a sequential fashion forming a multimeric L10(L12)X complex. In terms of processing, one or more lysine residues are methylated.

Its function is as follows. Forms part of the ribosomal stalk which helps the ribosome interact with GTP-bound translation factors. The protein is Large ribosomal subunit protein uL11 of Clostridium acetobutylicum (strain ATCC 824 / DSM 792 / JCM 1419 / IAM 19013 / LMG 5710 / NBRC 13948 / NRRL B-527 / VKM B-1787 / 2291 / W).